A 145-amino-acid chain; its full sequence is Snaclec salmorin subunit B (145 aa).

A signal peptide spans Met-1 to Ala-23. 3 disulfide bridges follow: Cys-25–Cys-36, Cys-53–Cys-141, and Cys-118–Cys-133. Residues Tyr-32 to Glu-142 enclose the C-type lectin domain. Ca(2+) is bound by residues Ser-64 and Glu-70. Glu-142 serves as a coordination point for Ca(2+).

The protein belongs to the snaclec family. Heterodimer of subunits A and B; disulfide-linked. As to expression, expressed by the venom gland.

It localises to the secreted. In terms of biological role, inhibits thrombin-induced fibrinogen clotting and factor Xa-induced prothrombin activation. Binds to thrombin and prothrombin exosites. In Gloydius brevicauda (Korean slamosa snake), this protein is Snaclec salmorin subunit B.